We begin with the raw amino-acid sequence, 501 residues long: MSEHQYILALDQGTTSSRAIVFDHQGNMKGVGQQEFRQHFPKPGWVEHDANEIWSTQIGVAQQALSNAGIRASDLAAIGITNQRETTLIWDRATGKPIHHAIVWQDRRTAPYCDSIRAQHEKTLQDKTGLVLDAYFSGTKVKWLLDNVPGARERAEKGELAFGTIDSWLVYNLTGGELHITDATNASRTLLYNIHTGEWDDELLRILDVPRSVLPEVRNSSEVYGKTAAGLLGAQVPIAGIGGDQQAATFGQACLERGMAKNTYGTGCFMLMNTEGEAVPSQNKLLTTVAWQLDGERTYALEGSVFIGGAVVQWLRDGLNIIRSSTEIEALARTVDSSEGVMLVPAFVGLGAPYWDAYARGTMVGITRGTTKAHIARAALEAVAYQSAELLEAMQKDSGVELKELRVDGGASTNDLMMQFQADILGVPVIRPKVTETTALGAAYLAGLAVGYWKSTDDIAHQWQEDKRFEPQMSEEERSKLMRRWKKAVARARDWEDDSEA.

Residue Thr-14 participates in ADP binding. Residues Thr-14, Thr-15, and Ser-16 each coordinate ATP. Thr-14 contacts sn-glycerol 3-phosphate. Arg-18 is an ADP binding site. Sn-glycerol 3-phosphate is bound by residues Arg-84, Glu-85, Tyr-135, and Asp-244. 5 residues coordinate glycerol: Arg-84, Glu-85, Tyr-135, Asp-244, and Gln-245. The ADP site is built by Thr-266 and Gly-309. Positions 266, 309, 313, and 410 each coordinate ATP. ADP is bound by residues Gly-410 and Asn-414.

Belongs to the FGGY kinase family.

The enzyme catalyses glycerol + ATP = sn-glycerol 3-phosphate + ADP + H(+). It participates in polyol metabolism; glycerol degradation via glycerol kinase pathway; sn-glycerol 3-phosphate from glycerol: step 1/1. Inhibited by fructose 1,6-bisphosphate (FBP). Key enzyme in the regulation of glycerol uptake and metabolism. Catalyzes the phosphorylation of glycerol to yield sn-glycerol 3-phosphate. The polypeptide is Glycerol kinase (Deinococcus radiodurans (strain ATCC 13939 / DSM 20539 / JCM 16871 / CCUG 27074 / LMG 4051 / NBRC 15346 / NCIMB 9279 / VKM B-1422 / R1)).